A 301-amino-acid polypeptide reads, in one-letter code: tRNA pseudouridine synthase B (301 aa).

Asp47 serves as the catalytic Nucleophile.

Belongs to the pseudouridine synthase TruB family. Type 1 subfamily.

The enzyme catalyses uridine(55) in tRNA = pseudouridine(55) in tRNA. Functionally, responsible for synthesis of pseudouridine from uracil-55 in the psi GC loop of transfer RNAs. The sequence is that of tRNA pseudouridine synthase B from Cereibacter sphaeroides (strain ATCC 17023 / DSM 158 / JCM 6121 / CCUG 31486 / LMG 2827 / NBRC 12203 / NCIMB 8253 / ATH 2.4.1.) (Rhodobacter sphaeroides).